The primary structure comprises 105 residues: Small ribosomal subunit protein uS10 (105 aa).

It belongs to the universal ribosomal protein uS10 family. As to quaternary structure, part of the 30S ribosomal subunit.

Its function is as follows. Involved in the binding of tRNA to the ribosomes. The sequence is that of Small ribosomal subunit protein uS10 from Rickettsia canadensis (strain McKiel).